Reading from the N-terminus, the 611-residue chain is Dihydroxy-acid dehydratase (611 aa).

Asp81 serves as a coordination point for Mg(2+). Cys122 lines the [2Fe-2S] cluster pocket. Mg(2+)-binding residues include Asp123 and Lys124. Lys124 bears the N6-carboxylysine mark. Cys195 contacts [2Fe-2S] cluster. Glu491 serves as a coordination point for Mg(2+). Ser517 functions as the Proton acceptor in the catalytic mechanism.

Belongs to the IlvD/Edd family. Homodimer. [2Fe-2S] cluster is required as a cofactor. It depends on Mg(2+) as a cofactor.

The catalysed reaction is (2R)-2,3-dihydroxy-3-methylbutanoate = 3-methyl-2-oxobutanoate + H2O. The enzyme catalyses (2R,3R)-2,3-dihydroxy-3-methylpentanoate = (S)-3-methyl-2-oxopentanoate + H2O. It participates in amino-acid biosynthesis; L-isoleucine biosynthesis; L-isoleucine from 2-oxobutanoate: step 3/4. The protein operates within amino-acid biosynthesis; L-valine biosynthesis; L-valine from pyruvate: step 3/4. In terms of biological role, functions in the biosynthesis of branched-chain amino acids. Catalyzes the dehydration of (2R,3R)-2,3-dihydroxy-3-methylpentanoate (2,3-dihydroxy-3-methylvalerate) into 2-oxo-3-methylpentanoate (2-oxo-3-methylvalerate) and of (2R)-2,3-dihydroxy-3-methylbutanoate (2,3-dihydroxyisovalerate) into 2-oxo-3-methylbutanoate (2-oxoisovalerate), the penultimate precursor to L-isoleucine and L-valine, respectively. This is Dihydroxy-acid dehydratase from Brucella suis (strain ATCC 23445 / NCTC 10510).